The sequence spans 142 residues: Metallothiol transferase FosB (142 aa).

A VOC domain is found at S5–G120. 3 residues coordinate Mg(2+): H8, H67, and E116. Residue E116 is the Proton donor/acceptor of the active site.

It belongs to the fosfomycin resistance protein family. FosB subfamily. Homodimer. Mg(2+) serves as cofactor.

The protein localises to the cytoplasm. Its function is as follows. Metallothiol transferase which confers resistance to fosfomycin by catalyzing the addition of a thiol cofactor to fosfomycin. L-cysteine is probably the physiological thiol donor. The polypeptide is Metallothiol transferase FosB (Staphylococcus epidermidis (strain ATCC 12228 / FDA PCI 1200)).